The chain runs to 303 residues: Movement protein (303 aa).

A coiled-coil region spans residues 272–302 (PPKRDFELTETSKLKSMISDLTQKVVNLDKK).

The protein belongs to the caulimoviridae movement protein family. In terms of assembly, homotrimer, through the coiled-coil domain. Interacts with VAP.

Its subcellular location is the host cell junction. The protein localises to the host plasmodesma. Transports viral genome to neighboring plant cells directly through plasmosdesmata, without any budding. The movement protein allows efficient cell to cell propagation, by bypassing the host cell wall barrier. Acts by forming tubules structures that increase the size exclusion limit (SEL) of plasmodesmata, thereby allowing viral ribonucleocapsids to spread directly to neighboring cells. This is Movement protein from Soybean chlorotic mottle virus.